The sequence spans 399 residues: MFSILLRLSLVTKIFIAIILGFVVAFLFPNMTPYFSIFGEIFIKALKAVAPILVFVLVISSIANFNVEQSAKNFKPILFLYIVSMLFAAFSAVIADLLFPTTLVLASSADQAFQPPGSLNDVLKNLILSFVSNPVVALSEANFIGILAWAIILGTAFRHSTQATKTVLQDCADAIGKVIHLVISFAPIGIFGLVAVTFAHSGIETLKSYSHLLLVLLGTMFFMALIVNPIMVACVIKKNPYPLVFKCLRESGITAFFTRSSAANIPVNLDLARRCGVDESTSNVIIPLGSTVNMCGAAITITVLTLATVNTLGISVDIWTMLILCVVASISACGASGVAGGSLLLVPVACSLFGISSDIAMQVVAIGMVISVLQDSTETALNSSTDVLFVIAVDQASKT.

A run of 9 helical transmembrane segments spans residues Leu8–Phe28, Ile37–Leu57, Ile77–Leu97, Pro134–Gly154, Val178–Phe198, Leu212–Val232, Val284–Leu304, Leu312–Ala332, and Val348–Ile370.

Belongs to the dicarboxylate/amino acid:cation symporter (DAACS) (TC 2.A.23) family.

It localises to the cell inner membrane. It carries out the reaction L-serine(in) + Na(+)(in) = L-serine(out) + Na(+)(out). The enzyme catalyses L-threonine(in) + Na(+)(in) = L-threonine(out) + Na(+)(out). Functionally, involved in the import of serine and threonine into the cell, with the concomitant import of sodium (symport system). The chain is Serine/threonine transporter SstT from Acinetobacter baylyi (strain ATCC 33305 / BD413 / ADP1).